A 1096-amino-acid chain; its full sequence is Pentatricopeptide repeat-containing protein At5g55840 (1096 aa).

PPR repeat units follow at residues N122 to P156, S157 to P191, D192 to P226, T227 to A261, D262 to P296, N297 to P331, N332 to P366, S367 to V401, G402 to P436, D437 to P471, N472 to R506, D507 to P541, N542 to P576, T577 to V607, D612 to P646, D647 to L681, N683 to P717, D718 to P752, N753 to P787, D788 to V822, D823 to L857, D858 to P892, E893 to P927, P928 to P962, T963 to L997, D998 to A1032, and N1033 to T1068.

Belongs to the PPR family. P subfamily.

The protein is Pentatricopeptide repeat-containing protein At5g55840 of Arabidopsis thaliana (Mouse-ear cress).